Consider the following 178-residue polypeptide: Bifunctional protein PyrR (178 aa).

A PRPP-binding motif is present at residues isoleucine 99–threonine 111.

It belongs to the purine/pyrimidine phosphoribosyltransferase family. PyrR subfamily. In terms of assembly, homodimer and homohexamer; in equilibrium.

The enzyme catalyses UMP + diphosphate = 5-phospho-alpha-D-ribose 1-diphosphate + uracil. In terms of biological role, regulates transcriptional attenuation of the pyrimidine nucleotide (pyr) operon by binding in a uridine-dependent manner to specific sites on pyr mRNA. This disrupts an antiterminator hairpin in the RNA and favors formation of a downstream transcription terminator, leading to a reduced expression of downstream genes. Functionally, also displays a weak uracil phosphoribosyltransferase activity which is not physiologically significant. In Clostridium novyi (strain NT), this protein is Bifunctional protein PyrR.